The chain runs to 763 residues: Phosphoglycerol transferase I (763 aa).

4 helical membrane-spanning segments follow: residues 1 to 21 (MSELLSFALFLASVLIYAWKA), 26 to 46 (WWFAATLTVLGLFVVLNITLF), 77 to 97 (ILPGIGIVLGLTAVFGALGWI), and 108 to 128 (FGYSLLALLLALGSVDASPAF).

Belongs to the OpgB family.

Its subcellular location is the cell inner membrane. The catalysed reaction is a phosphatidylglycerol + a membrane-derived-oligosaccharide D-glucose = a 1,2-diacyl-sn-glycerol + a membrane-derived-oligosaccharide 6-(glycerophospho)-D-glucose.. It functions in the pathway glycan metabolism; osmoregulated periplasmic glucan (OPG) biosynthesis. In terms of biological role, transfers a phosphoglycerol residue from phosphatidylglycerol to the membrane-bound nascent glucan backbones. The protein is Phosphoglycerol transferase I of Escherichia coli (strain SMS-3-5 / SECEC).